Reading from the N-terminus, the 285-residue chain is ATP synthase gamma chain (285 aa).

This sequence belongs to the ATPase gamma chain family. F-type ATPases have 2 components, CF(1) - the catalytic core - and CF(0) - the membrane proton channel. CF(1) has five subunits: alpha(3), beta(3), gamma(1), delta(1), epsilon(1). CF(0) has three main subunits: a, b and c.

It localises to the cell membrane. Produces ATP from ADP in the presence of a proton gradient across the membrane. The gamma chain is believed to be important in regulating ATPase activity and the flow of protons through the CF(0) complex. In Geobacillus sp. (strain WCH70), this protein is ATP synthase gamma chain.